The primary structure comprises 173 residues: Alpha-crystallin A chain (173 aa).

The residue at position 1 (Met-1) is an N-acetylmethionine. A required for complex formation with BFSP1 and BFSP2 region spans residues 1-63; it reads MDVTIQHPWF…RTVLDSGISE (63 aa). Residue Gln-6 is modified to Deamidated glutamine; partial. Phosphoserine is present on Ser-45. Gln-50 carries the post-translational modification Deamidated glutamine; partial. A sHSP domain is found at 52–162; sequence LFRTVLDSGI…SHSERAIPVS (111 aa). Position 99 is an N6-acetyllysine (Lys-99). His-100 serves as a coordination point for Zn(2+). Asn-101 is subject to Deamidated asparagine; partial. Positions 102 and 107 each coordinate Zn(2+). Ser-122 carries the post-translational modification Phosphoserine. Asn-123 bears the Deamidated asparagine; partial mark. The cysteines at positions 131 and 142 are disulfide-linked. Gln-147 is modified (deamidated glutamine; partial). The interval 147-173 is disordered; sequence QSGMDASHSERAIPVSREEKPSSAPSS. Residues 153-167 show a composition bias toward basic and acidic residues; sequence SHSERAIPVSREEKP. His-154 serves as a coordination point for Zn(2+). Ser-162 carries an O-linked (GlcNAc) serine glycan.

Belongs to the small heat shock protein (HSP20) family. In terms of assembly, heteromer composed of three CRYAA and one CRYAB subunits. Inter-subunit bridging via zinc ions enhances stability, which is crucial as there is no protein turn over in the lens. Can also form homodimers and homotetramers (dimers of dimers) which serve as the building blocks of homooligomers. Within homooligomers, the zinc-binding motif is created from residues of 3 different molecules. His-100 and Glu-102 from one molecule are ligands of the zinc ion, and His-107 and His-154 residues from additional molecules complete the site with tetrahedral coordination geometry. Part of a complex required for lens intermediate filament formation composed of BFSP1, BFSP2 and CRYAA. Undergoes age-dependent proteolytical cleavage at the C-terminus.

The protein localises to the cytoplasm. It localises to the nucleus. Contributes to the transparency and refractive index of the lens. In its oxidized form (absence of intramolecular disulfide bond), acts as a chaperone, preventing aggregation of various proteins under a wide range of stress conditions. Required for the correct formation of lens intermediate filaments as part of a complex composed of BFSP1, BFSP2 and CRYAA. This is Alpha-crystallin A chain (CRYAA) from Procavia capensis (Rock hyrax).